Reading from the N-terminus, the 459-residue chain is 20S-pre-rRNA D-site endonuclease NOB1 (459 aa).

The 106-residue stretch at 10-115 folds into the PINc domain; sequence RALILDATPL…LNNGDWRLRK (106 aa). Residues 120 to 150 are compositionally biased toward basic and acidic residues; it reads ALDASKADVGTDGKQKLTEDNKKEEDSESVP. The interval 120 to 205 is disordered; sequence ALDASKADVG…EQICNDENIK (86 aa). Positions 151-164 are enriched in basic residues; it reads KKKNKRRGGKKQKA. A compositionally biased stretch (basic and acidic residues) spans 165–194; that stretch reads KREAREAREAENANLELESKAEEHVEEAGS. Zn(2+) contacts are provided by Cys-304, Cys-307, Cys-323, and Cys-326. Residues 366-385 are disordered; that stretch reads ASPLSKNSQKRYGKKGHVHS. A compositionally biased stretch (basic residues) spans 373-385; sequence SQKRYGKKGHVHS.

This sequence belongs to the NOB1 family. As to quaternary structure, component of the small ribosomal subunit, ribosomal RNA processing complex (SSU RRP complex). Interacts with PNO1.

The protein resides in the cytoplasm. Its subcellular location is the nucleus. It localises to the nucleolus. It is found in the endoplasmic reticulum. Its function is as follows. Required for the synthesis of 40S ribosome subunits. Has a role in processing 20S pre-rRNA into the mature 18S rRNA, where it is required for cleavage at the 3' end of the mature 18S rRNA (D-site). Accompanies the 20S pre-rRNA from the nucleus to the cytoplasm. In association with NIN1, may promote the recruitment of the proteasome to the ribosomal subunits stalled in maturation. This Saccharomyces cerevisiae (strain ATCC 204508 / S288c) (Baker's yeast) protein is 20S-pre-rRNA D-site endonuclease NOB1 (NOB1).